A 126-amino-acid polypeptide reads, in one-letter code: Profilin-3 (126 aa).

The protein belongs to the profilin family. As to quaternary structure, occurs in many kinds of cells as a complex with monomeric actin in a 1:1 ratio. In terms of tissue distribution, in embryos, expression is specifically detected in body wall muscle cells. In adults, expression is localized to a striking dot-like fashion in body wall muscle.

Its subcellular location is the cytoplasm. It is found in the cytoskeleton. In terms of biological role, binds to actin and affects the structure of the cytoskeleton. At high concentrations, profilin prevents the polymerization of actin, whereas it enhances it at low concentrations. By binding to PIP2, it inhibits the formation of IP3 and DG. Also binds to poly(L-proline) and phosphatidylinositol 4,5-bisphosphate micelles. In Caenorhabditis elegans, this protein is Profilin-3 (pfn-3).